The following is a 468-amino-acid chain: Argininosuccinate lyase (468 aa).

The protein belongs to the lyase 1 family. Argininosuccinate lyase subfamily.

The protein localises to the cytoplasm. It catalyses the reaction 2-(N(omega)-L-arginino)succinate = fumarate + L-arginine. It participates in amino-acid biosynthesis; L-arginine biosynthesis; L-arginine from L-ornithine and carbamoyl phosphate: step 3/3. The chain is Argininosuccinate lyase from Alkalilimnicola ehrlichii (strain ATCC BAA-1101 / DSM 17681 / MLHE-1).